Here is a 97-residue protein sequence, read N- to C-terminus: MKIVREALAGTQESSDLMVKIAPADGELEIVIHSEVIKQFGDQIRQVVNETLHALAVRQGLIIVEDKGALDCVIRARLQSAVLRAAEEQPIDWSKMS.

Serine 14 is subject to O-(phosphoribosyl dephospho-coenzyme A)serine.

It belongs to the CitD family. In terms of assembly, oligomer with a subunit composition of (alpha,beta,gamma)6.

It localises to the cytoplasm. Its function is as follows. Covalent carrier of the coenzyme of citrate lyase. The polypeptide is Citrate lyase acyl carrier protein (Enterobacter sp. (strain 638)).